The sequence spans 82 residues: MALSLFTVGQLIFLFWTMRITEARPDPAAKAAPAAAAVPAAAAPDTASDAAAAAALTAANAAAAAKLTADNAAAAAAATARG.

A signal peptide spans 1–23 (MALSLFTVGQLIFLFWTMRITEA). Residues 24 to 44 (RPDPAAKAAPAAAAVPAAAAP) constitute a propeptide, removed by a dipeptidylpeptidase. Arg-81 is modified (arginine amide).

The protein belongs to the type-I AFP family. In terms of processing, amidated. Detected in liver (at protein level).

It is found in the secreted. The protein resides in the extracellular space. Functionally, contributes to protect fish blood from freezing at subzero sea water temperatures. Lowers the blood freezing point. Binds to nascent ice crystals and prevents further growth. The chain is Ice-structuring protein B from Pseudopleuronectes americanus (Winter flounder).